The primary structure comprises 350 residues: Uroporphyrinogen decarboxylase (350 aa).

Residues 28-32 (RQAGR), D78, Y155, S210, and H325 contribute to the substrate site.

It belongs to the uroporphyrinogen decarboxylase family. As to quaternary structure, homodimer.

Its subcellular location is the cytoplasm. The enzyme catalyses uroporphyrinogen III + 4 H(+) = coproporphyrinogen III + 4 CO2. It functions in the pathway porphyrin-containing compound metabolism; protoporphyrin-IX biosynthesis; coproporphyrinogen-III from 5-aminolevulinate: step 4/4. Its function is as follows. Catalyzes the decarboxylation of four acetate groups of uroporphyrinogen-III to yield coproporphyrinogen-III. This Picosynechococcus sp. (strain ATCC 27264 / PCC 7002 / PR-6) (Agmenellum quadruplicatum) protein is Uroporphyrinogen decarboxylase.